Reading from the N-terminus, the 160-residue chain is 2-C-methyl-D-erythritol 2,4-cyclodiphosphate synthase (160 aa).

Positions 11 and 13 each coordinate a divalent metal cation. 4-CDP-2-C-methyl-D-erythritol 2-phosphate is bound by residues 11-13 (DVH) and 37-38 (HS). Residue histidine 45 coordinates a divalent metal cation. 4-CDP-2-C-methyl-D-erythritol 2-phosphate is bound by residues 59–61 (DIG), 64–68 (FPDTD), 103–109 (AQAPKMA), 135–138 (TTTE), phenylalanine 142, and arginine 145.

It belongs to the IspF family. Homotrimer. It depends on a divalent metal cation as a cofactor.

It carries out the reaction 4-CDP-2-C-methyl-D-erythritol 2-phosphate = 2-C-methyl-D-erythritol 2,4-cyclic diphosphate + CMP. Its pathway is isoprenoid biosynthesis; isopentenyl diphosphate biosynthesis via DXP pathway; isopentenyl diphosphate from 1-deoxy-D-xylulose 5-phosphate: step 4/6. Involved in the biosynthesis of isopentenyl diphosphate (IPP) and dimethylallyl diphosphate (DMAPP), two major building blocks of isoprenoid compounds. Catalyzes the conversion of 4-diphosphocytidyl-2-C-methyl-D-erythritol 2-phosphate (CDP-ME2P) to 2-C-methyl-D-erythritol 2,4-cyclodiphosphate (ME-CPP) with a corresponding release of cytidine 5-monophosphate (CMP). The sequence is that of 2-C-methyl-D-erythritol 2,4-cyclodiphosphate synthase from Thiobacillus denitrificans (strain ATCC 25259 / T1).